The primary structure comprises 275 residues: Small ribosomal subunit protein uS3 (275 aa).

Residues 38–106 enclose the KH type-2 domain; sequence IRRMMTSGME…QVQLNILEVK (69 aa). The segment covering 216 to 228 has biased composition (low complexity); the sequence is NAAARAGNRPARG. A disordered region spans residues 216–275; sequence NAAARAGNRPARGGADRPARGGRGGERGGRGRKPQQAPAAEAPKAEAPAAAPAESTGTEA. The span at 229–244 shows a compositional bias: basic and acidic residues; the sequence is GADRPARGGRGGERGG. Positions 249–268 are enriched in low complexity; the sequence is PQQAPAAEAPKAEAPAAAPA.

The protein belongs to the universal ribosomal protein uS3 family. Part of the 30S ribosomal subunit. Forms a tight complex with proteins S10 and S14.

Functionally, binds the lower part of the 30S subunit head. Binds mRNA in the 70S ribosome, positioning it for translation. This is Small ribosomal subunit protein uS3 from Streptomyces avermitilis (strain ATCC 31267 / DSM 46492 / JCM 5070 / NBRC 14893 / NCIMB 12804 / NRRL 8165 / MA-4680).